Here is a 199-residue protein sequence, read N- to C-terminus: Interleukin-11 (199 aa).

The signal sequence occupies residues 1 to 21 (MNCVCRLVLVVLSLWPDRVVA). Residues 182–190 (HLTLDWAVR) are important for interaction with IL11RA and for the stimulation of cell proliferation.

The protein belongs to the IL-6 superfamily. As to quaternary structure, interacts with either IL11RA1 or IL11RA2 to associate with IL6ST, giving rise to a multimeric signaling complex.

The protein localises to the secreted. Its function is as follows. Cytokine that stimulates the proliferation of hematopoietic stem cells and megakaryocyte progenitor cells and induces megakaryocyte maturation resulting in increased platelet production. Also promotes the proliferation of hepatocytes in response to liver damage. Binding to its receptor formed by IL6ST and either IL11RA1 or IL11RA2 activates a signaling cascade that promotes cell proliferation, also in the context of various cancers. Signaling leads to the activation of intracellular protein kinases and the phosphorylation of STAT3. The interaction with the membrane-bound IL11RA and IL6ST stimulates 'classic signaling', whereas the binding of IL11 and soluble IL11RA to IL6ST stimulates 'trans-signaling'. The protein is Interleukin-11 of Mus musculus (Mouse).